Consider the following 353-residue polypeptide: Ribosomal RNA small subunit methyltransferase H (353 aa).

Residues 50–52 (GGY), aspartate 69, phenylalanine 96, aspartate 117, and glutamine 124 each bind S-adenosyl-L-methionine. The disordered stretch occupies residues 276-353 (AAQASRHVPG…PAPQGRGPRR (78 aa)).

Belongs to the methyltransferase superfamily. RsmH family.

It localises to the cytoplasm. It carries out the reaction cytidine(1402) in 16S rRNA + S-adenosyl-L-methionine = N(4)-methylcytidine(1402) in 16S rRNA + S-adenosyl-L-homocysteine + H(+). Functionally, specifically methylates the N4 position of cytidine in position 1402 (C1402) of 16S rRNA. The polypeptide is Ribosomal RNA small subunit methyltransferase H (Methylorubrum extorquens (strain CM4 / NCIMB 13688) (Methylobacterium extorquens)).